A 140-amino-acid polypeptide reads, in one-letter code: Endoribonuclease YbeY (140 aa).

The Zn(2+) site is built by histidine 100, histidine 104, and histidine 110.

This sequence belongs to the endoribonuclease YbeY family. The cofactor is Zn(2+).

The protein resides in the cytoplasm. Functionally, single strand-specific metallo-endoribonuclease involved in late-stage 70S ribosome quality control and in maturation of the 3' terminus of the 16S rRNA. This is Endoribonuclease YbeY from Helicobacter pylori (strain Shi470).